A 970-amino-acid chain; its full sequence is Serine/threonine-protein kinase PLK4 (970 aa).

The Protein kinase domain occupies 12–265; sequence FKVGNLLGKG…LSSVLDHPFM (254 aa). ATP is bound by residues 18–26 and Lys-41; that span reads LGKGSFAGV. An N6-acetyllysine mark is found at Lys-45 and Lys-46. The active-site Proton acceptor is Asp-136. The tract at residues 324-373 is disordered; that stretch reads VFPKNKSSSDFSSSGDGNSFYTQWGNQETSNSGRGRVIQDAEERPHSRYL. Residues 327–343 show a composition bias toward low complexity; it reads KNKSSSDFSSSGDGNSF. The segment covering 344 to 356 has biased composition (polar residues); sequence YTQWGNQETSNSG. Positions 360-369 are enriched in basic and acidic residues; that stretch reads VIQDAEERPH. A Phosphoserine modification is found at Ser-401. Positions 498 to 540 are disordered; it reads ISPTRDFQGHPDLQKDTSKNAWTDTKVKKNSDASDNAHSVKQP. The span at 504-515 shows a compositional bias: basic and acidic residues; the sequence is FQGHPDLQKDTS. A compositionally biased stretch (polar residues) spans 530 to 540; it reads ASDNAHSVKQP. One can recognise a Cryptic POLO box 1 (CPB1) domain in the interval 586 to 699; sequence TLRSITSPLV…SRFVQLVRSK (114 aa). A Phosphoserine modification is found at Ser-665. The Cryptic POLO box 2 (CPB2) domain occupies 700–813; sequence SPKITYFTRY…GRKPGSTSSP (114 aa). Residues 808–829 are disordered; it reads GSTSSPKALSPPPSVDSNYPTR. Phosphoserine is present on Ser-817. The POLO box domain occupies 886–964; it reads QLLKSVFVKN…LSSILLMFSN (79 aa).

This sequence belongs to the protein kinase superfamily. Ser/Thr protein kinase family. CDC5/Polo subfamily. As to quaternary structure, homodimer. Interacts with CEP152 (via N-terminus). Interacts with CEP78; this interaction may be important for proper PLK4 localization to the centriole and PLK4-induced overduplication of centrioles. Interacts with CEP131. Interacts simultaneously with TENT5C and CEP192. Interacts with TENT5C; this interaction leads to the TENT5C recruitment in the centrosome. Interacts with CEP85; this interaction may be important in cell migration and centriole assembly. Post-translationally, ubiquitinated; leading to its degradation by the proteasome. Deubiquitinated by USP54; leading to PLK4 stabilization. In terms of processing, tyrosine-phosphorylated by TEC. Acetylation by KAT2A and KAT2B impairs kinase activity by shifting the kinase to an inactive conformation.

The protein resides in the cytoplasm. It is found in the cytoskeleton. The protein localises to the microtubule organizing center. Its subcellular location is the centrosome. It localises to the centriole. The protein resides in the nucleus. It is found in the nucleolus. The protein localises to the cleavage furrow. It catalyses the reaction L-seryl-[protein] + ATP = O-phospho-L-seryl-[protein] + ADP + H(+). The catalysed reaction is L-threonyl-[protein] + ATP = O-phospho-L-threonyl-[protein] + ADP + H(+). Functionally, serine/threonine-protein kinase that plays a central role in centriole duplication. Able to trigger procentriole formation on the surface of the parental centriole cylinder, leading to the recruitment of centriole biogenesis proteins such as SASS6, CPAP, CCP110, CEP135 and gamma-tubulin. When overexpressed, it is able to induce centrosome amplification through the simultaneous generation of multiple procentrioles adjoining each parental centriole during S phase. Phosphorylates 'Ser-151' of FBXW5 during the G1/S transition, leading to inhibit FBXW5 ability to ubiquitinate SASS6. Its central role in centriole replication suggests a possible role in tumorigenesis, centrosome aberrations being frequently observed in tumors. Also involved in deuterosome-mediated centriole amplification in multiciliated that can generate more than 100 centrioles. Also involved in trophoblast differentiation by phosphorylating HAND1, leading to disrupt the interaction between HAND1 and MDFIC and activate HAND1. Phosphorylates CDC25C and CHEK2. Required for the recruitment of STIL to the centriole and for STIL-mediated centriole amplification. Phosphorylates CEP131 and PCM1 which is essential for proper organization and integrity of centriolar satellites. The sequence is that of Serine/threonine-protein kinase PLK4 from Pongo abelii (Sumatran orangutan).